The chain runs to 193 residues: dTTP/UTP pyrophosphatase (193 aa).

D75 serves as the catalytic Proton acceptor.

It belongs to the Maf family. YhdE subfamily. A divalent metal cation is required as a cofactor.

It localises to the cytoplasm. The catalysed reaction is dTTP + H2O = dTMP + diphosphate + H(+). The enzyme catalyses UTP + H2O = UMP + diphosphate + H(+). Its function is as follows. Nucleoside triphosphate pyrophosphatase that hydrolyzes dTTP and UTP. May have a dual role in cell division arrest and in preventing the incorporation of modified nucleotides into cellular nucleic acids. This chain is dTTP/UTP pyrophosphatase, found in Chlorobium phaeovibrioides (strain DSM 265 / 1930) (Prosthecochloris vibrioformis (strain DSM 265)).